We begin with the raw amino-acid sequence, 356 residues long: MTRPIQASLDLQVMKQNLAIVRRAAPEARVWSVVKANAYGHGIERVWSALGATDGFAMLNLEEAITLRERGWKGPILMLEGFFHAQDLEAYDTYRLTTCIHSNWQLKALQNARLNAPLDIYVKVNSGMNRLGFQPERAQTVWQQLRAMRNVGEMTLMSHFAQADHPEGIGEAMRRIALATEGLQCAYSLSNSAATLWHPQAHYDWVRPGIILYGASPSGQWRDIADTGLKPVMTLSSEIIGVQTLSAGERVGYGGGYSVTQEQRIGIVAAGYADGYPRHAPTGTPVLVDGIRTRTVGTVSMDMLAVDLTPCPQAGIGTPVELWGKEIKVDDVASAAGTLGYGLLCAVAPRVPFVTT.

Residue Lys35 is the Proton acceptor; specific for D-alanine of the active site. At Lys35 the chain carries N6-(pyridoxal phosphate)lysine. Arg130 contributes to the substrate binding site. Tyr253 (proton acceptor; specific for L-alanine) is an active-site residue. Met301 is a substrate binding site.

It belongs to the alanine racemase family. Pyridoxal 5'-phosphate is required as a cofactor.

The enzyme catalyses L-alanine = D-alanine. In terms of biological role, isomerizes L-alanine to D-alanine which is then oxidized to pyruvate by DadA. This chain is Alanine racemase, catabolic (dadX), found in Salmonella typhi.